The chain runs to 379 residues: Deoxyguanosinetriphosphate triphosphohydrolase-like protein (379 aa).

Residues 69–200 (RLTHTIEVAQ…ANLADEIAYS (132 aa)) form the HD domain.

The protein belongs to the dGTPase family. Type 2 subfamily.

This is Deoxyguanosinetriphosphate triphosphohydrolase-like protein from Azoarcus sp. (strain BH72).